The sequence spans 264 residues: Regulatory protein RecX (264 aa).

This sequence belongs to the RecX family.

The protein resides in the cytoplasm. In terms of biological role, modulates RecA activity. This is Regulatory protein RecX from Limosilactobacillus reuteri (strain DSM 20016) (Lactobacillus reuteri).